The following is a 350-amino-acid chain: MSKNKLSKGQQRRVNANHQRRLKTSKEKPDYDDNLFGEPDEGIVISRFGMHADVESADGDVHRCNIRRTIRSLVTGDRVVWRPGKPAAEGVNVKGIVEAVHERTSVLTRPDFYDGVKPIAANIDQIVIVSAILPELSLNIIDRYLVACETLQIEPIIVLNKIDLLDDEGMAFVNEQMDIYRNIGYRVLMVSSHTQDGLKPLEEALTGRISIFAGQSGVGKSSLLNALLGLQKEILTNDISDNSGLGQHTTTAARLYHFPHGGDVIDSPGVREFGLWHLEPEQITQGFVEFHDYLGLCKYRDCKHDTDPGCAIREAVEEGKIAETRFENYHRILESMAQVKTRKNFSDTDD.

Positions 1-17 (MSKNKLSKGQQRRVNAN) are enriched in polar residues. Residues 1-33 (MSKNKLSKGQQRRVNANHQRRLKTSKEKPDYDD) form a disordered region. Residues 104 to 273 (TSVLTRPDFY…VIDSPGVREF (170 aa)) form the CP-type G domain. Residues 160–163 (NKID) and 214–222 (GQSGVGKSS) contribute to the GTP site. The Zn(2+) site is built by Cys-297, Cys-302, His-304, and Cys-310.

It belongs to the TRAFAC class YlqF/YawG GTPase family. RsgA subfamily. In terms of assembly, monomer. Associates with 30S ribosomal subunit, binds 16S rRNA. The cofactor is Zn(2+).

It is found in the cytoplasm. One of several proteins that assist in the late maturation steps of the functional core of the 30S ribosomal subunit. Helps release RbfA from mature subunits. May play a role in the assembly of ribosomal proteins into the subunit. Circularly permuted GTPase that catalyzes slow GTP hydrolysis, GTPase activity is stimulated by the 30S ribosomal subunit. The protein is Small ribosomal subunit biogenesis GTPase RsgA of Escherichia coli (strain ATCC 8739 / DSM 1576 / NBRC 3972 / NCIMB 8545 / WDCM 00012 / Crooks).